The sequence spans 104 residues: Fusaric acid biosynthesis protein 2 (104 aa).

The protein belongs to the YciI family.

It participates in mycotoxin biosynthesis. Its function is as follows. Part of the gene cluster that mediates the biosynthesis of fusaric acid, a mycotoxin with low to moderate toxicity to animals and humans, but with high phytotoxic properties. L-aspartate is suggested as fusaric acid amino acid precursor that is activated and further processed to O-acetyl-L-homoserine by cluster enzymes aspartate kinase FUB3 and homoserine O-acetyltransferase FUB5, as well as enzymes of the primary metabolism. The polyketide synthase (PKS) FUB1 generates the triketide trans-2-hexenal which is presumptively released by the hydrolase FUB4 and linked to the NRPS-bound amino acid precursor by NAD(P)-dependent dehydrogenase FUB6. FUB1, FUB4, and the non-canonical NRPS Fub8 may form an enzyme complex. Further processing of the NRPS-bound intermediate might be carried out by FUB6 and the sulfhydrylase FUB7, enabling a spontaneous electrocyclization to close the carbon backbone of fusaric acid. Dihydrofusaric acid is likely to be released via reduction by the thioester reductase (TR) domain of FUB8 whereupon the final oxidation to fusaric acid may (also) be performed by the FMN-dependent dehydrogenase FUB9. This chain is Fusaric acid biosynthesis protein 2, found in Gibberella fujikuroi (strain CBS 195.34 / IMI 58289 / NRRL A-6831) (Bakanae and foot rot disease fungus).